The chain runs to 352 residues: UPF0324 membrane protein RA0957 (352 aa).

10 helical membrane passes run 24–43, 48–67, 104–126, 136–158, 169–191, 201–223, 235–257, 272–294, 301–318, and 328–350; these read VVSYFPGLAVAVLIAISAQF, YGAPATLMALLLGMSLNFLS, LGVSLLCLVTTALACTILFAIIV, LSLLTGGAVAICGASAAVALNAV, LALTIVAITLLSTSAMVLYPVLA, SGVFIGGTIHDVAQVVGAGFAMS, IVRVSLLAPTIIAVLIMVTVLGA, GFVLGFAFLAALKSMGFLPAAAG, SRWLLLIALGAVGLKTSV, and HVTLALLATAFLAAFIVVGLLWY.

It belongs to the UPF0324 family.

The protein resides in the cell membrane. This is UPF0324 membrane protein RA0957 from Rhizobium meliloti (strain 1021) (Ensifer meliloti).